We begin with the raw amino-acid sequence, 308 residues long: MITFLSITFSILVGVIFVIGNFANGFIALVNSIEWVKRQKISFADQILTGLAVSRVGLLWVLLLHLYATEFNLAFYSVEVRITAYNVWIVTNHFSNWLSTSLSMFYLLKIATFSNLIFLHLKRKVKSVILVTLLGPLLFLVCHLFVMNMNHIVWRKEYEGNITWRIKLRSAMYLSNVTVTMLANLIPLTLTLMSFLLLICSLCKHLKKMQVHGKGSQDPSTKVHIKALQTVTSFLLLCAIYFLSMILSVWNFELEKKPVFMFCQAVIFSYPSTHPLILIWGNKKLKQIFLSVLWNVRYWVKGQKPSSP.

Position 1 (M1) is a topological domain, extracellular. Residues 2-22 form a helical membrane-spanning segment; that stretch reads ITFLSITFSILVGVIFVIGNF. The Cytoplasmic portion of the chain corresponds to 23–46; that stretch reads ANGFIALVNSIEWVKRQKISFADQ. Residues 47–67 form a helical membrane-spanning segment; sequence ILTGLAVSRVGLLWVLLLHLY. Topologically, residues 68 to 86 are extracellular; it reads ATEFNLAFYSVEVRITAYN. The chain crosses the membrane as a helical span at residues 87 to 107; it reads VWIVTNHFSNWLSTSLSMFYL. Residues 108–126 lie on the Cytoplasmic side of the membrane; that stretch reads LKIATFSNLIFLHLKRKVK. A helical membrane pass occupies residues 127 to 147; sequence SVILVTLLGPLLFLVCHLFVM. Residues 148-178 lie on the Extracellular side of the membrane; that stretch reads NMNHIVWRKEYEGNITWRIKLRSAMYLSNVT. N-linked (GlcNAc...) asparagine glycosylation is found at N161 and N176. The chain crosses the membrane as a helical span at residues 179–199; the sequence is VTMLANLIPLTLTLMSFLLLI. The Cytoplasmic portion of the chain corresponds to 200–229; that stretch reads CSLCKHLKKMQVHGKGSQDPSTKVHIKALQ. The helical transmembrane segment at 230–250 threads the bilayer; sequence TVTSFLLLCAIYFLSMILSVW. Topologically, residues 251-258 are extracellular; it reads NFELEKKP. The helical transmembrane segment at 259–279 threads the bilayer; the sequence is VFMFCQAVIFSYPSTHPLILI. At 280 to 308 the chain is on the cytoplasmic side; sequence WGNKKLKQIFLSVLWNVRYWVKGQKPSSP.

The protein belongs to the G-protein coupled receptor T2R family.

It is found in the membrane. Its subcellular location is the cell projection. It localises to the cilium membrane. Its function is as follows. Receptor that may play a role in the perception of bitterness and is gustducin-linked. May play a role in sensing the chemical composition of the gastrointestinal content. The activity of this receptor may stimulate alpha gustducin, mediate PLC-beta-2 activation and lead to the gating of TRPM5. In airway epithelial cells, binding of bitter compounds increases the intracellular calcium ion concentration and stimulates ciliary beat frequency. This Macaca mulatta (Rhesus macaque) protein is Taste receptor type 2 member 46 (TAS2R46).